We begin with the raw amino-acid sequence, 308 residues long: Porphobilinogen deaminase (308 aa).

Cysteine 241 carries the S-(dipyrrolylmethanemethyl)cysteine modification.

This sequence belongs to the HMBS family. Monomer. The cofactor is dipyrromethane.

The enzyme catalyses 4 porphobilinogen + H2O = hydroxymethylbilane + 4 NH4(+). It participates in porphyrin-containing compound metabolism; protoporphyrin-IX biosynthesis; coproporphyrinogen-III from 5-aminolevulinate: step 2/4. Its function is as follows. Tetrapolymerization of the monopyrrole PBG into the hydroxymethylbilane pre-uroporphyrinogen in several discrete steps. The protein is Porphobilinogen deaminase of Exiguobacterium sibiricum (strain DSM 17290 / CCUG 55495 / CIP 109462 / JCM 13490 / 255-15).